The chain runs to 367 residues: Putative C-&gt;U-editing enzyme APOBEC-4 (367 aa).

Positions 61–177 (PQTKHLTFYE…AWNREALRSL (117 aa)) constitute a CMP/dCMP-type deaminase domain. Residue His-93 participates in Zn(2+) binding. Catalysis depends on Glu-95, which acts as the Proton donor. Cys-127 and Cys-134 together coordinate Zn(2+).

The protein belongs to the cytidine and deoxycytidylate deaminase family. The cofactor is Zn(2+). Predominantly expressed in testis.

Its function is as follows. Putative C to U editing enzyme whose physiological substrate is not yet known. This chain is Putative C-&gt;U-editing enzyme APOBEC-4 (APOBEC4), found in Homo sapiens (Human).